The sequence spans 412 residues: MLKELEVNGKRFFLAPESNFWAIGEREEVERFYRERKDALLEEMQRYRFEVDIRTAYINPTESCNRNCPYCYIPAEIRERGTKMSYEKLEEILTVLAENGVERVIFHGAEPLMVKDEIFRAMEDFDFKYGIQTNATLLEEEDAELLMKKGASVGISLDSPYKETNDYLRGKGHYDAVMRALDFFDGYRSLNIIMTVNKHNFQHLPAMVDFLAGKVSVMLANPVRGTSPGGRELRPPEGFEDYYIKAIDRAIENTKSGRRIVIGDFANILLGLVAPTSRVLQCDISPCGGGRRFFAVSADGIYPCGEFIGMEEFRANLSALSDWSSLIEKFEVVRKRTVEQIEECRNCEFRNLCGAPCPAEIYAESGTMLRKSPYCEFYKKLALKAMDVIARGDVRNVLKLERMKAIYRVEDF.

A Radical SAM core domain is found at 50–264; sequence EVDIRTAYIN…KSGRRIVIGD (215 aa). [4Fe-4S] cluster-binding residues include C64, C68, and C71.

The protein belongs to the radical SAM superfamily. Anaerobic sulfatase-maturating enzyme family. Requires [4Fe-4S] cluster as cofactor.

This is an uncharacterized protein from Archaeoglobus fulgidus (strain ATCC 49558 / DSM 4304 / JCM 9628 / NBRC 100126 / VC-16).